The following is a 204-amino-acid chain: Holliday junction branch migration complex subunit RuvA (204 aa).

The tract at residues 1 to 64 (MIGKLKGTID…EDQLKLFGFM (64 aa)) is domain I. The domain II stretch occupies residues 65–143 (TALEREWFNL…AFAGEAINIA (79 aa)). The interval 144 to 151 (LKQELGEG) is flexible linker. The tract at residues 152-204 (VAAAPVADAVSALTNLGYSRDQAANAVAAAMKTAGDDADSAKLIRLGLKELAR) is domain III.

This sequence belongs to the RuvA family. As to quaternary structure, homotetramer. Forms an RuvA(8)-RuvB(12)-Holliday junction (HJ) complex. HJ DNA is sandwiched between 2 RuvA tetramers; dsDNA enters through RuvA and exits via RuvB. An RuvB hexamer assembles on each DNA strand where it exits the tetramer. Each RuvB hexamer is contacted by two RuvA subunits (via domain III) on 2 adjacent RuvB subunits; this complex drives branch migration. In the full resolvosome a probable DNA-RuvA(4)-RuvB(12)-RuvC(2) complex forms which resolves the HJ.

The protein localises to the cytoplasm. Functionally, the RuvA-RuvB-RuvC complex processes Holliday junction (HJ) DNA during genetic recombination and DNA repair, while the RuvA-RuvB complex plays an important role in the rescue of blocked DNA replication forks via replication fork reversal (RFR). RuvA specifically binds to HJ cruciform DNA, conferring on it an open structure. The RuvB hexamer acts as an ATP-dependent pump, pulling dsDNA into and through the RuvAB complex. HJ branch migration allows RuvC to scan DNA until it finds its consensus sequence, where it cleaves and resolves the cruciform DNA. The protein is Holliday junction branch migration complex subunit RuvA of Rhizobium leguminosarum bv. trifolii (strain WSM2304).